The following is a 256-amino-acid chain: tRNA pseudouridine synthase A (256 aa).

The active-site Nucleophile is aspartate 49. Tyrosine 104 is a substrate binding site.

It belongs to the tRNA pseudouridine synthase TruA family.

It carries out the reaction uridine(38/39/40) in tRNA = pseudouridine(38/39/40) in tRNA. Formation of pseudouridine at positions 38, 39 and 40 in the anticodon stem and loop of transfer RNAs. This chain is tRNA pseudouridine synthase A, found in Methanopyrus kandleri (strain AV19 / DSM 6324 / JCM 9639 / NBRC 100938).